Here is a 944-residue protein sequence, read N- to C-terminus: Valine--tRNA ligase (944 aa).

Positions 43–53 (PNVTGTLHMGH) match the 'HIGH' region motif. The short motif at 550–554 (KMSKS) is the 'KMSKS' region element. K553 provides a ligand contact to ATP. Residues 878–944 (LVDMDAERTR…TGLREQRAKL (67 aa)) adopt a coiled-coil conformation.

This sequence belongs to the class-I aminoacyl-tRNA synthetase family. ValS type 1 subfamily. In terms of assembly, monomer.

It is found in the cytoplasm. It catalyses the reaction tRNA(Val) + L-valine + ATP = L-valyl-tRNA(Val) + AMP + diphosphate. In terms of biological role, catalyzes the attachment of valine to tRNA(Val). As ValRS can inadvertently accommodate and process structurally similar amino acids such as threonine, to avoid such errors, it has a 'posttransfer' editing activity that hydrolyzes mischarged Thr-tRNA(Val) in a tRNA-dependent manner. The chain is Valine--tRNA ligase from Xanthomonas campestris pv. campestris (strain 8004).